The primary structure comprises 33 residues: Mu/omega-theraphotoxin-Tap2a (33 aa).

Cystine bridges form between cysteine 2/cysteine 17, cysteine 9/cysteine 22, and cysteine 16/cysteine 29.

The protein belongs to the neurotoxin 10 (Hwtx-1) family. 59 (Tltx) subfamily. In terms of tissue distribution, expressed by the venom gland.

The protein resides in the secreted. Its function is as follows. Gating-modifier toxin that inhibits both sodium (Nav) and calcium (Cav3) channels by inducing hyperpolarizing shift in voltage-dependence of activation and steady state inactivation. Inhibits Nav1.1/SCN1A, Nav1.2/SCN2A, Nav1.6/SCN6A, Nav1.7/SCN9A and Cav3.1/CACNA1G sodium and calcium channels at nanomolar concentrations (IC(50)=169-621 nM). Surprisingly, selectively slows fast inactivation of Nav1.3/SCN3A. Also shows moderate inhibition of Nav1.3/SCN3A sodium channels (IC(50)=1216 nM). This Theraphosa apophysis (Goliath pinkfoot tarantula) protein is Mu/omega-theraphotoxin-Tap2a.